Consider the following 981-residue polypeptide: MALAVLRVLDPFPTETPPLAVLLPPGGPWPATGLGLVLALRPASESPAKPALLVAAVEGSGAQGEQRGPGPPPLLVSRALLRVLALGPGARVRARLVRRPPALGWALLATAPGPGLGPRVGPLLVRRGETLPVPGSRVLETRPALQGLLGPGTRLAVTELRGRAKLGQESRDHSHPPPPPVVSSFAASHSVRRLRGVLGGTGDALGVSRSCLRSLGLFQGEWVWVAQVAELPNSSQPRLAQVQVLEPRWELSERLGPNSGQQPGEPLADGLVFLPATLAFNLGCDPLEVGELRIQRYLEGSIAPENKGSCSPLPGPPFARELHIEILSSPHYSANGNYDHVLYRHFQTPRVVQEGDVLCVSTAGQVEILEGSLERLPRWREMFFKVKKTVGEAPEGPASAFLADTTHTSLYLAGTALSHVPSLPSGRSPPWDSLSPPGLEALVNELCAILKPHLQPGGTLLTGTSCVLLQGPPGSGKTTAVTAACSRLGLHLLKVPCSSLCADSSRAVETKLQATFSRARRCRPAVLLLTAVDLLGRDRDGLGEDARVAATLRHLLLDEDALSRCPPLMVVATTSRVQDLPTDVQTAFPHELEVPVLSEAQRLSILQALTAHLPLGQEVNLPQLARRCAGFVVGDLYALLTHTCRAACTRIRASGSAGGLSEEDEGDLCVAGFPLLAEDFGQALDQLQTAHSQAVGAPRIPSVSWHDVGGLQDVKKEILETIQLPLEHPELLSLGLRRSGLLLHGPPGTGKTLLAKAVATECSLTFLSVKGPELINMYVGQSEENVREVFARARAAAPCIIFFDELDSLAPSRGRSGDSGGVMDRVVSQLLAELDGLHSTQDVFVIGATNRPDLLDPALLRPGRFDKLVFVGASEDRASQLRVLSAITRKFKLEASVSLANVLDCCPPQLTGADLYSLCSDAMMTALKRRVRDLEEGLELRSSALLLTMEDLLQAAARLQPSVSEQELLRYKRIQRKFAAC.

The residue at position 119 (Arg-119) is an Omega-N-methylarginine. ATP is bound by residues 471–478 and 745–752; these read GPPGSGKT and GPPGTGKT.

The protein belongs to the AAA ATPase family. In terms of assembly, interacts with PEX1; forming the PEX1-PEX6 AAA ATPase complex, which is composed of a heterohexamer formed by a trimer of PEX1-PEX6 dimers. Interacts with PEX26; interaction is direct and promotes recruitment to peroxisomal membranes. Interacts with ZFAND6. In terms of tissue distribution, in the teeth, expressed in ameloblasts and odontoblasts. Expressed in the retina, at higher levels in the ganglion cell layer and photoreceptor layer at the joint between the outer and inner segments.

Its subcellular location is the cytoplasm. It localises to the cytosol. The protein resides in the peroxisome membrane. The protein localises to the cell projection. It is found in the cilium. Its subcellular location is the photoreceptor outer segment. The catalysed reaction is ATP + H2O = ADP + phosphate + H(+). In terms of biological role, component of the PEX1-PEX6 AAA ATPase complex, a protein dislocase complex that mediates the ATP-dependent extraction of the PEX5 receptor from peroxisomal membranes, an essential step for PEX5 recycling. Specifically recognizes PEX5 monoubiquitinated at 'Cys-11', and pulls it out of the peroxisome lumen through the PEX2-PEX10-PEX12 retrotranslocation channel. Extraction by the PEX1-PEX6 AAA ATPase complex is accompanied by unfolding of the TPR repeats and release of bound cargo from PEX5. This chain is Peroxisomal ATPase PEX6, found in Mus musculus (Mouse).